Consider the following 325-residue polypeptide: All-trans-nonaprenyl-diphosphate synthase (geranyl-diphosphate specific) (325 aa).

Lysine 48, arginine 51, and histidine 81 together coordinate isopentenyl diphosphate. Aspartate 88 and aspartate 92 together coordinate Mg(2+). An all-trans-polyprenyl diphosphate is bound at residue arginine 97. Arginine 98 provides a ligand contact to isopentenyl diphosphate. Positions 174, 175, 211, and 228 each coordinate an all-trans-polyprenyl diphosphate.

It belongs to the FPP/GGPP synthase family. Homodimer. The cofactor is Mg(2+).

It carries out the reaction 7 isopentenyl diphosphate + (2E)-geranyl diphosphate = all-trans-nonaprenyl diphosphate + 7 diphosphate. Functionally, catalyzes the sequential condensation of isopentenyl diphosphate (IPP) with the allylic substrate to give solanesyl diphosphate. Could be important to determine the side chain length of ubiquinone. This Rhodobacter capsulatus (Rhodopseudomonas capsulata) protein is All-trans-nonaprenyl-diphosphate synthase (geranyl-diphosphate specific) (sdsA).